The chain runs to 274 residues: Deoxyribonuclease TATDN3 (274 aa).

Residues H12, H14, E107, H147, H170, and D218 each coordinate Zn(2+).

The protein belongs to the metallo-dependent hydrolases superfamily. TatD-type hydrolase family. It depends on Mn(2+) as a cofactor. The cofactor is Ca(2+). Requires Mg(2+) as cofactor. Zn(2+) serves as cofactor.

It localises to the nucleus. With respect to regulation, the 3'-exonuclease activity is sensitive to the metal ion present in the active site, whereas the AP endodeoxyribonuclease activity is observed in a variety of divalent metal cofactors. 3'-exoxonuclease activity is suppressed in the presence of Ca(2+), Zn(2+) and Ni(2+). Its function is as follows. Exhibits 3'-exonuclease activities and apurinic/apyrimidinic (AP) endonuclease (in vitro). Show preferential AP endonuclease activity on double-stranded DNA substrates and 3'- exonuclease activity on single-stranded DNA. This is Deoxyribonuclease TATDN3 (TATDN3) from Homo sapiens (Human).